We begin with the raw amino-acid sequence, 6907 residues long: Fibrous sheath-interacting protein 2 (6907 aa).

The segment at 273-292 (EERIEEQQHRNREESDRKKQ) is disordered. S430 carries the post-translational modification Phosphoserine. 8 disordered regions span residues 439 to 472 (SQAF…ESGP), 954 to 990 (FQKS…RPFP), 1545 to 1573 (VQED…TKEM), 3202 to 3257 (VSSD…FDQT), 5650 to 5672 (RTSS…EHHS), 5725 to 5781 (SAQS…KPGI), 5850 to 5880 (DKGN…EAPS), and 6852 to 6874 (GSAN…KQGS). The span at 445-460 (PSKEEKETNADWDGRP) shows a compositional bias: basic and acidic residues. Positions 954-966 (FQKSRQPRISSPS) are enriched in polar residues. Composition is skewed to basic and acidic residues over residues 1545-1555 (VQEDNKEETKS) and 3213-3229 (SVED…RPDS). Residues 5728 to 5741 (SVTTKKVSSSTNKN) are compositionally biased toward low complexity. A coiled-coil region spans residues 5738 to 5766 (TNKNISAKEKEEEEREKEKVREEIKSEPS). Positions 5743-5778 (SAKEKEEEEREKEKVREEIKSEPSKPDDPQNQRESK) are enriched in basic and acidic residues.

In terms of assembly, may interact with AKAP4. As to expression, predominantly expressed in testis.

Its function is as follows. Plays a role in spermatogenesis. The protein is Fibrous sheath-interacting protein 2 (FSIP2) of Homo sapiens (Human).